Reading from the N-terminus, the 419-residue chain is MQLSLSALTTVALALTSSLVDAKAHSIKLSKLSNEETLDASNFQEYTNSLANKYLNLFNTAHGNPSNFGLQHVLTNQEAEVPFVTPKKGGKYDAPLTNYLNAQYFTEIQIGTPGQPFKVILDTGSSNLWVPSQDCTSLACFLHAKYDHDASSTYKVNGSEFSIQYGSGSMEGYISQDVLTIGDLVIPGQDFAEATSEPGLAFAFGKFDGILGLAYDTISVNHIVPPIYNAINQGLLEKPQFGFYLGSTDKDENDGGLATFGGYDASLFQGKITWLPIRRKAYWEVSFEGIGLGDEYAELHKTGAAIDTGTSLITLPSSLAEIINAKIGATKSWSGQYQVDCAKRDSLPDLTLTFAGYNFTLTPYDYILEVSGSCISVFTPMDFPQPIGDLAIVGDAFLRKYYSIYDLDKNAVGLAPTKV.

Positions 1-22 (MQLSLSALTTVALALTSSLVDA) are cleaved as a signal peptide. The Peptidase A1 domain maps to 104-415 (YFTEIQIGTP…DLDKNAVGLA (312 aa)). Aspartate 122 is an active-site residue. The cysteines at positions 135 and 140 are disulfide-linked. Asparagine 157 carries an N-linked (GlcNAc...) asparagine glycan. Residue aspartate 307 is part of the active site. Cysteine 341 and cysteine 374 are joined by a disulfide. A glycan (N-linked (GlcNAc...) asparagine) is linked at asparagine 358. The Microbody targeting signal signature appears at 417-419 (TKV).

The protein belongs to the peptidase A1 family.

The protein resides in the vacuole. In Candida albicans (Yeast), this protein is Vacuolar aspartic protease (APR1).